The primary structure comprises 127 residues: DNA-directed RNA polymerase subunit omega (127 aa).

The protein belongs to the RNA polymerase subunit omega family. As to quaternary structure, the RNAP catalytic core consists of 2 alpha, 1 beta, 1 beta' and 1 omega subunit. When a sigma factor is associated with the core the holoenzyme is formed, which can initiate transcription.

The enzyme catalyses RNA(n) + a ribonucleoside 5'-triphosphate = RNA(n+1) + diphosphate. Promotes RNA polymerase assembly. Latches the N- and C-terminal regions of the beta' subunit thereby facilitating its interaction with the beta and alpha subunits. In Rickettsia peacockii (strain Rustic), this protein is DNA-directed RNA polymerase subunit omega.